The sequence spans 183 residues: MNLSAKTVVVIAIGAALYGIGGLPMFGIPVFANTTLKPAMAVLALFSVLYGPIVGFLVGFIGHWVTDLFAGWGVWLTWVLGSGIVGMIIGLFPIITKNRIESGLFDKKDFLIFVVLAFFGNVFGYGTSAFLDTILYAEPFTKVFMQLCIIAAGNTFLIAIVGYFILNNLAKRKKQSTNLTEAP.

5 helical membrane passes run V8–I28, A41–I61, W75–I95, F110–F130, and L147–N167.

It belongs to the UPF0397 family.

The protein localises to the cell membrane. The chain is UPF0397 protein VFMJ11_1662 from Aliivibrio fischeri (strain MJ11) (Vibrio fischeri).